Consider the following 355-residue polypeptide: Erythronate-4-phosphate dehydrogenase (355 aa).

Substrate contacts are provided by Ser-45 and Thr-66. NAD(+) is bound at residue Asp-146. The active site involves Arg-206. Residue Asp-229 coordinates NAD(+). The active site involves Glu-234. The active-site Proton donor is His-251. Residue Gly-254 participates in NAD(+) binding. Tyr-255 serves as a coordination point for substrate.

The protein belongs to the D-isomer specific 2-hydroxyacid dehydrogenase family. PdxB subfamily. Homodimer.

It is found in the cytoplasm. The catalysed reaction is 4-phospho-D-erythronate + NAD(+) = (R)-3-hydroxy-2-oxo-4-phosphooxybutanoate + NADH + H(+). Its pathway is cofactor biosynthesis; pyridoxine 5'-phosphate biosynthesis; pyridoxine 5'-phosphate from D-erythrose 4-phosphate: step 2/5. In terms of biological role, catalyzes the oxidation of erythronate-4-phosphate to 3-hydroxy-2-oxo-4-phosphonooxybutanoate. This Acinetobacter baylyi (strain ATCC 33305 / BD413 / ADP1) protein is Erythronate-4-phosphate dehydrogenase.